The chain runs to 238 residues: Protein Iojap, chloroplastic (238 aa).

A chloroplast-targeting transit peptide spans 1 to 66 (MASSTGLTVA…KILTSLSNSR (66 aa)).

The protein belongs to the Iojap/RsfS family. As to quaternary structure, interacts with chloroplast ribosomal protein uL14c (rpl14).

It localises to the plastid. Its subcellular location is the chloroplast. In terms of biological role, may be a ribosome silencing factor (Potential). Involved in plastid biogenesis. This chain is Protein Iojap, chloroplastic (IJ), found in Arabidopsis thaliana (Mouse-ear cress).